A 464-amino-acid polypeptide reads, in one-letter code: NADH-quinone oxidoreductase subunit N (464 aa).

13 helical membrane-spanning segments follow: residues 5-25 (MLLA…VLFL), 31-51 (LLSA…PASL), 63-83 (LFAR…CLLS), 96-116 (EYAA…ASTS), 117-137 (LVSL…LIAV), 152-172 (LLPG…VYAA), 188-208 (GAPM…AAAF), 242-262 (VFAV…RPLL), 286-303 (MLAY…LAVL), 312-332 (AGLF…GLLA), 358-378 (AVLL…AGFM), 393-415 (VGLV…RPVL), and 436-456 (LIFV…GPFF).

Belongs to the complex I subunit 2 family. NDH-1 is composed of 14 different subunits. Subunits NuoA, H, J, K, L, M, N constitute the membrane sector of the complex.

The protein resides in the cell inner membrane. The catalysed reaction is a quinone + NADH + 5 H(+)(in) = a quinol + NAD(+) + 4 H(+)(out). Functionally, NDH-1 shuttles electrons from NADH, via FMN and iron-sulfur (Fe-S) centers, to quinones in the respiratory chain. The immediate electron acceptor for the enzyme in this species is believed to be ubiquinone. Couples the redox reaction to proton translocation (for every two electrons transferred, four hydrogen ions are translocated across the cytoplasmic membrane), and thus conserves the redox energy in a proton gradient. This is NADH-quinone oxidoreductase subunit N from Syntrophotalea carbinolica (strain DSM 2380 / NBRC 103641 / GraBd1) (Pelobacter carbinolicus).